The sequence spans 630 residues: Plastin-1 (630 aa).

Methionine 1 carries the post-translational modification N-acetylmethionine. EF-hand domains lie at 11-46 (EELE…ASLP) and 51-86 (KVRE…LKSK). Ca(2+) contacts are provided by aspartate 24, aspartate 26, serine 28, tyrosine 30, glutamate 35, aspartate 64, asparagine 66, aspartate 68, lysine 70, and glutamate 75. Actin-binding regions lie at residues 108–381 (TSSI…CLHK) and 382–626 (PDNN…GKGL). 4 consecutive Calponin-homology (CH) domains span residues 122-238 (EEEK…KVGL), 266-377 (LSPE…NTYP), 396-505 (SKEE…RRYT), and 517-626 (KVTD…GKGL).

Monomer. Phosphorylated. In terms of tissue distribution, in the inner ear, it is expressed in the organ of Corti. Abundant in the utricle (at protein level).

It localises to the cytoplasm. It is found in the cell projection. Its subcellular location is the stereocilium. Functionally, actin-bundling protein. In the inner ear, it is required for stereocilia formation. Mediates liquid packing of actin filaments that is necessary for stereocilia to grow to their proper dimensions. This Mus musculus (Mouse) protein is Plastin-1 (Pls1).